Reading from the N-terminus, the 423-residue chain is E3 ubiquitin-protein ligase makorin-2 (423 aa).

2 C3H1-type zinc fingers span residues 2-29 (STKQ…HDLN) and 31-58 (SKPS…HIKP). The interval 59–90 (SSRGGGGGAPEDQAGGGGAGGGGAGIGGAGGG) is disordered. Residues 61–90 (RGGGGGAPEDQAGGGGAGGGGAGIGGAGGG) are compositionally biased toward gly residues. The C3H1-type 3 zinc finger occupies 162–189 (QNLPQLCPYAANGHCFYEENCTYLHGDL). A makorin-type Cys-His region spans residues 190 to 219 (CEVCGLQVLHPHDSEQRRAHEKMCLAAFEA). Residues 235–289 (CSICMEVVVQKANPSDRRFGILSSCCHTFCLACIRKWRCTRTFSNTIIKSCPECR) form an RING-type zinc finger. A C3H1-type 4 zinc finger spans residues 318-347 (GVSKKACKYFDQGRGSCPFGGKCLYLHAFP).

It localises to the cytoplasm. It is found in the nucleus. It carries out the reaction S-ubiquitinyl-[E2 ubiquitin-conjugating enzyme]-L-cysteine + [acceptor protein]-L-lysine = [E2 ubiquitin-conjugating enzyme]-L-cysteine + N(6)-ubiquitinyl-[acceptor protein]-L-lysine.. It participates in protein modification; protein ubiquitination. Functionally, E3 ubiquitin ligase catalyzing the covalent attachment of ubiquitin moieties onto substrate proteins. Inhibits neurogenesis and axis formation during embryonic development by modulating the phosphatidylinositol 3-kinase (PI3K) pathway. Acts downstream of PI3K and akt1 to up-regulate gsk3b mRNA expression. The sequence is that of E3 ubiquitin-protein ligase makorin-2 (mkrn2) from Seriola quinqueradiata (Five-ray yellowtail).